Reading from the N-terminus, the 119-residue chain is Thrombin-like enzyme TLBan (119 aa).

A Peptidase S1 domain is found at V1–A112. Active-site charge relay system residues include H40 and D59. C54 and C118 form a disulfide bridge.

Monomer. In terms of processing, contains both N-linked carbohydrates and sialic acid. Expressed by the venom gland.

The protein resides in the secreted. With respect to regulation, strongly inhibited by PMSF and slightly inhibited by EDTA and soybean trypsin inhibitor. Its function is as follows. Thrombin-like snake venom serine protease, with high clotting activity in vitro. Also has fibrinogenolytic ability, showing a fast degradation of fibrinogen Aalpha chain (FGA), a slow degradation of Bbeta chain (FGB) and no degradation of gamma chain. Also causes platelet aggregation in platelet rich plasma (PRP) and washed platelet suspension. The chain is Thrombin-like enzyme TLBan from Bothrocophias andianus (Andean lancehead).